A 462-amino-acid chain; its full sequence is 3-ketoacyl-CoA thiolase 2, peroxisomal (462 aa).

The transit peptide at methionine 1 to cysteine 34 directs the protein to the peroxisome. Cysteine 138 serves as the catalytic Acyl-thioester intermediate. A disulfide bridge connects residues cysteine 138 and cysteine 192. Residues histidine 393 and cysteine 425 each act as proton acceptor in the active site.

It belongs to the thiolase-like superfamily. Thiolase family. Forms homodimers. In terms of tissue distribution, accumulates in etiolated cotyledons and in seedlings, also present in roots, flowers and siliques (at protein level). High levels in wounded leaves.

Its subcellular location is the peroxisome. It is found in the glyoxysome. It carries out the reaction an acyl-CoA + acetyl-CoA = a 3-oxoacyl-CoA + CoA. Its pathway is lipid metabolism; fatty acid metabolism. Involved in long chain fatty-acid beta-oxidation prior to gluconeogenesis during germination and subsequent seedling growth. Confers sensitivity to 2,4-dichlorophenoxybutiric acid (2,4-DB). Required for local and systemic induction of jasmonic acid (JA) biosynthesis after wounding. Seems to be involved in JA biosynthesis during senescence. May be involved in the positive regulation of abscisic acid-activated signaling pathway. This Arabidopsis thaliana (Mouse-ear cress) protein is 3-ketoacyl-CoA thiolase 2, peroxisomal (PED1).